We begin with the raw amino-acid sequence, 441 residues long: Chitinase-like protein Idgf3 (441 aa).

The first 23 residues, 1–23 (MSGSLWLSLALSLAVLAQFKVSA), serve as a signal peptide directing secretion. The 417-residue stretch at 25–441 (PNLVCFYDSQ…MLRAIKYRLL (417 aa)) folds into the GH18 domain. The cysteines at positions 29 and 56 are disulfide-linked. A glycan (N-linked (GlcNAc...) asparagine) is linked at asparagine 221. The tract at residues 310-331 (GDSGMPVVSSTQGPAPAGPQSK) is disordered. Cysteine 342 and cysteine 425 are oxidised to a cystine.

The protein belongs to the glycosyl hydrolase 18 family. IDGF subfamily. In terms of processing, glycosylated.

It is found in the secreted. Cooperates with insulin-like peptides to stimulate the proliferation, polarization and motility of imaginal disk cells. May act by stabilizing the binding of insulin-like peptides to its receptor through a simultaneous interaction with both molecules to form a multiprotein signaling complex. This is Chitinase-like protein Idgf3 (Idgf3) from Drosophila simulans (Fruit fly).